A 320-amino-acid polypeptide reads, in one-letter code: Ferrochelatase (320 aa).

Fe cation-binding residues include H194 and E275.

Belongs to the ferrochelatase family. In terms of assembly, monomer.

Its subcellular location is the cytoplasm. It carries out the reaction heme b + 2 H(+) = protoporphyrin IX + Fe(2+). It functions in the pathway porphyrin-containing compound metabolism; protoheme biosynthesis; protoheme from protoporphyrin-IX: step 1/1. Its function is as follows. Catalyzes the ferrous insertion into protoporphyrin IX. In Shigella dysenteriae serotype 1 (strain Sd197), this protein is Ferrochelatase.